Consider the following 51-residue polypeptide: UPF0181 protein VV2_0310 (51 aa).

It belongs to the UPF0181 family.

The polypeptide is UPF0181 protein VV2_0310 (Vibrio vulnificus (strain CMCP6)).